The primary structure comprises 298 residues: MEEKQILCVGLVVLDIINVVDKYPEEDTDRRCLSQRWQRGGNASNSCTVLSLLGARCAFMGSLAPGHVADFLVADFRQRGVDVSQVTWQSQGDTPCSCCIVNNSNGSRTIILYDTNLPDVSAKDFEKVDLTRFKWIHIEGRNASEQVKMLQRIEEHNAKQPLPQKVRVSVEIEKPREELFQLFSYGEVVFVSKDVAKHLGFQPAVEALRGLYSRVKKGATLVCAWAEEGADALGPDGQLLHSDAFPPPRVVDTLGAGDTFNASVIFSLSKGNSMQEALRFGCQVAGKKCGLQGFDGIV.

Beta-D-fructose contacts are provided by Asp-15, Gly-41, Asn-42, and Asn-45. Residues Arg-108, 226-229, and 255-258 each bind ATP; these read AEEG and GAGD. A beta-D-fructose-binding site is contributed by Asp-258.

The protein belongs to the carbohydrate kinase PfkB family. Homodimer.

It carries out the reaction beta-D-fructose + ATP = beta-D-fructose 1-phosphate + ADP + H(+). It functions in the pathway carbohydrate metabolism; fructose metabolism. Requires potassium. Inhibition by ADP. In terms of biological role, catalyzes the phosphorylation of the ketose sugar fructose to fructose-1-phosphate. This is Ketohexokinase from Mus musculus (Mouse).